The sequence spans 456 residues: Ammonium transporter Amt2 (456 aa).

Helical transmembrane passes span 18–38 (LVWV…FAML), 61–81 (IGVI…AGLT), 109–129 (WLFG…AVAG), 141–161 (ILIA…GGFL), 170–190 (AGGM…AWII), 211–231 (ITFA…FNVG), 255–275 (VALV…GVAF), 281–301 (VDTL…TAIA), 304–324 (IVWP…PIVF), 339–359 (VFPV…VFAV), and 377–397 (VGVG…FGGF).

Belongs to the ammonia transporter channel (TC 1.A.11.2) family. In terms of assembly, homotrimer. Interacts with both GlnK1 and GlnK2 after ammonium shock.

Its subcellular location is the cell membrane. In terms of biological role, involved in the uptake of ammonium/ammonia (NH(4)(+)/NH(3)). Transport is electrogenic. The sequence is that of Ammonium transporter Amt2 from Haloferax mediterranei (strain ATCC 33500 / DSM 1411 / JCM 8866 / NBRC 14739 / NCIMB 2177 / R-4) (Halobacterium mediterranei).